The chain runs to 447 residues: MKRKKTVIHQLISEKQRFEKAKEGGNMAAKDDFGTTKYIIHAEFEANGVVERPDVVGAIFGQTEGLLGDDLDLRELQKTGRIGRIKVEVHTKAGKTYGTILVPSSLDRVETAIIAAALETIDRVGPCEAKIRVIKIEDVRATKRKYIIERAKEILETLMEEEIPETQELVEEVRKAVREMELIEYGPEKLPAGPHVPFSDSIIVVEGRADVLNLLRHGIKNAIAVEGTSIPETIIKLSKERIVTAFTDGDRGGELILKELLQVADIDYVARAPEGKEVEELTKKEIIKALRSKVPADQLLTIVQQRKELFDKLGRERRRGGARKQEYTKKGSLNPQPQVHPNEKIVKPLKVLKPDYKEFEEFIEKVKNDSIALLIDENKNIIKEVPIRDMLSAIESSESIYAVVFNGVITQRLIDIVSEKGAKYLIGARKANVVRRPITLKIITFAE.

The Toprim domain occupies 200-274 (DSIIVVEGRA…DIDYVARAPE (75 aa)). Residues glutamate 206, aspartate 248, and aspartate 250 each contribute to the Mg(2+) site. The interval 316–339 (ERRRGGARKQEYTKKGSLNPQPQV) is disordered.

It belongs to the archaeal DnaG primase family. As to quaternary structure, forms a ternary complex with MCM helicase and DNA. Component of the archaeal exosome complex. Mg(2+) serves as cofactor.

The enzyme catalyses ssDNA + n NTP = ssDNA/pppN(pN)n-1 hybrid + (n-1) diphosphate.. RNA polymerase that catalyzes the synthesis of short RNA molecules used as primers for DNA polymerase during DNA replication. Also part of the exosome, which is a complex involved in RNA degradation. Acts as a poly(A)-binding protein that enhances the interaction between heteromeric, adenine-rich transcripts and the exosome. This is DNA primase DnaG from Pyrococcus furiosus (strain ATCC 43587 / DSM 3638 / JCM 8422 / Vc1).